Here is a 1481-residue protein sequence, read N- to C-terminus: Cystic fibrosis transmembrane conductance regulator (1481 aa).

Residues M1–F77 are Cytoplasmic-facing. The helical transmembrane segment at F78–Q98 threads the bilayer. The 285-residue stretch at F81–L365 folds into the ABC transmembrane type-1 1 domain. Over P99 to Y122 the chain is Extracellular. A helical transmembrane segment spans residues L123–H146. Residues H147–L195 lie on the Cytoplasmic side of the membrane. Residues A196–W216 form a helical membrane-spanning segment. Residues E217–F222 lie on the Extracellular side of the membrane. Residues T223–M243 form a helical membrane-spanning segment. Residues M244–K298 are Cytoplasmic-facing. Residues A299–F319 traverse the membrane as a helical segment. Residues L320–T339 are Extracellular-facing. Residues I340 to V358 form a helical membrane-spanning segment. Over Q359 to S858 the chain is Cytoplasmic. ATP is bound by residues W401, G457–T464, and Q492. In terms of domain architecture, ABC transporter 1 spans N423 to G645. Residue C523 is the site of S-palmitoyl cysteine attachment. 2 positions are modified to phosphoserine: S548 and S659. Residues T653–D831 are disordered R region. S669 carries the post-translational modification Phosphoserine; by PKA. Residue S685 is modified to Phosphoserine. A Glycyl lysine isopeptide (Lys-Gly) (interchain with G-Cter in ubiquitin) cross-link involves residue K687. 2 positions are modified to phosphoserine: S699 and S711. A Phosphothreonine modification is found at T716. Phosphoserine is present on residues S736, S767, S790, S795, and S813. Residues L859 to V879 traverse the membrane as a helical segment. Residues L859–S1155 form the ABC transmembrane type-1 2 domain. The Extracellular portion of the chain corresponds to V880 to I918. N-linked (GlcNAc...) asparagine glycans are attached at residues N894 and N900. Residues Y919–H939 form a discontinuously helical membrane-spanning segment. Residues T940–T990 are Cytoplasmic-facing. The chain crosses the membrane as a helical span at residues I991–L1011. The Extracellular portion of the chain corresponds to Q1012–P1013. The chain crosses the membrane as a helical span at residues Y1014–L1034. Over H1035–T1095 the chain is Cytoplasmic. A helical transmembrane segment spans residues L1096 to F1116. The Extracellular portion of the chain corresponds to I1117–G1130. A helical membrane pass occupies residues I1131–I1151. The Cytoplasmic segment spans residues D1152–L1481. Residues M1211–P1444 enclose the ABC transporter 2 domain. ATP contacts are provided by residues Y1220 and G1245–S1252. An interaction with GORASP2 region spans residues R1387–L1481. Residue C1396 is the site of S-palmitoyl cysteine attachment. The disordered stretch occupies residues P1452–L1481. Positions Q1453–N1464 are enriched in low complexity. S1457 bears the Phosphoserine mark. Acidic residues predominate over residues E1471 to L1481. The PDZ-binding motif lies at T1479 to L1481.

Belongs to the ABC transporter superfamily. ABCC family. CFTR transporter (TC 3.A.1.202) subfamily. As to quaternary structure, monomer; does not require oligomerization for channel activity. May form oligomers in the membrane. Interacts with SLC26A3, SLC26A6 and NHERF1. Interacts with SHANK2. Interacts with MYO6. Interacts (via C-terminus) with GOPC (via PDZ domain); this promotes CFTR internalization and thereby decreases channel activity. Interacts with SLC4A7 through NHERF1. Found in a complex with MYO5B and RAB11A. Interacts with ANO1. Interacts with SLC26A8. Interacts with AHCYL1; the interaction increases CFTR activity. Interacts with CSE1L. The core-glycosylated form interacts with GORASP2 (via PDZ GRASP-type 1 domain) in respone to ER stress. Interacts with MARCHF2; the interaction leads to CFTR ubiqtuitination and degradation. Interacts with ADGRG2. N-glycosylated. In terms of processing, phosphorylated; cAMP treatment promotes phosphorylation and activates the channel. Dephosphorylation decreases the ATPase activity (in vitro). Phosphorylation at PKA sites activates the channel. Phosphorylation at PKC sites enhances the response to phosphorylation by PKA. Phosphorylated by AMPK; this inhibits channel activity. Post-translationally, ubiquitinated, leading to its degradation in the lysosome. Deubiquitination by USP10 in early endosomes enhances its endocytic recycling to the cell membrane. Ubiquitinated by RNF185 during ER stress. Ubiquitinated by MARCHF2.

Its subcellular location is the apical cell membrane. It is found in the early endosome membrane. The protein localises to the cell membrane. It localises to the recycling endosome membrane. The protein resides in the endoplasmic reticulum membrane. Its subcellular location is the nucleus. It carries out the reaction ATP + H2O + closed Cl(-) channel = ADP + phosphate + open Cl(-) channel.. The catalysed reaction is chloride(in) = chloride(out). It catalyses the reaction hydrogencarbonate(in) = hydrogencarbonate(out). The enzyme catalyses ATP + H2O = ADP + phosphate + H(+). Epithelial ion channel that plays an important role in the regulation of epithelial ion and water transport and fluid homeostasis. Mediates the transport of chloride ions across the cell membrane. Possesses an intrinsic ATPase activity and utilizes ATP to gate its channel; the passive flow of anions through the channel is gated by cycles of ATP binding and hydrolysis by the ATP-binding domains. The ion channel is also permeable to HCO(3)(-); selectivity depends on the extracellular chloride concentration. Exerts its function also by modulating the activity of other ion channels and transporters. Contributes to the regulation of the pH and the ion content of the epithelial fluid layer. Modulates the activity of the epithelial sodium channel (ENaC) complex, in part by regulating the cell surface expression of the ENaC complex. May regulate bicarbonate secretion and salvage in epithelial cells by regulating the transporter SLC4A7. Can inhibit the chloride channel activity of ANO1. Plays a role in the chloride and bicarbonate homeostasis during sperm epididymal maturation and capacitation. The chain is Cystic fibrosis transmembrane conductance regulator from Muntiacus muntjak (Barking deer).